The primary structure comprises 135 residues: Transcriptional regulator HosA (135 aa).

Positions 4 to 134 (RNKAFHQLRQ…FMQLVRKMMN (131 aa)) constitute an HTH marR-type domain. Positions 48–71 (QVALIEAAVSTKATLAEMLARMEN) form a DNA-binding region, H-T-H motif.

Its function is as follows. Involved in the temperature-dependent positive control of flagellum-driven swimming motility and cellular aggregation. Regulates fliC expression by directly interacting with fliC promoter. The polypeptide is Transcriptional regulator HosA (hosA) (Escherichia coli O111:H-).